The primary structure comprises 558 residues: Serine/threonine-protein phosphatase 2B catalytic subunit (558 aa).

Asp128, His130, and Asp156 together coordinate Fe cation. Residues Asp156 and Asn188 each contribute to the Zn(2+) site. His189 acts as the Proton donor in catalysis. Zn(2+) is bound by residues His237 and His319. 2 disordered regions span residues 415–439 (LRED…NQDP) and 534–558 (ALER…LSTS). Over residues 420–435 (ATTSPGSASPALPSAA) the composition is skewed to low complexity. A compositionally biased stretch (basic and acidic residues) spans 534-548 (ALERATREADNDKKL). Polar residues predominate over residues 549-558 (QTLSRRLSTS).

Belongs to the PPP phosphatase family. PP-2B subfamily. In terms of assembly, composed of two components (A and B), the A component is the catalytic subunit and the B component confers calcium sensitivity. Requires Fe(3+) as cofactor. Zn(2+) serves as cofactor.

It catalyses the reaction O-phospho-L-seryl-[protein] + H2O = L-seryl-[protein] + phosphate. The enzyme catalyses O-phospho-L-threonyl-[protein] + H2O = L-threonyl-[protein] + phosphate. Functionally, calcium-dependent, calmodulin-stimulated protein phosphatase. This subunit may have a role in the calmodulin activation of calcineurin. The protein is Serine/threonine-protein phosphatase 2B catalytic subunit (cna-1) of Neurospora crassa (strain ATCC 24698 / 74-OR23-1A / CBS 708.71 / DSM 1257 / FGSC 987).